Here is a 303-residue protein sequence, read N- to C-terminus: Probable cell division protein WhiA (303 aa).

The H-T-H motif DNA-binding region spans 272-303 (SIQQLADSLSTPLTKSGVNHRLRKINKIADEL).

The protein belongs to the WhiA family.

In terms of biological role, involved in cell division and chromosome segregation. This Streptococcus pneumoniae (strain ATCC 700669 / Spain 23F-1) protein is Probable cell division protein WhiA.